Reading from the N-terminus, the 98-residue chain is YcgL domain-containing protein CJA_2437 (98 aa).

Residues 3–87 form the YcgL domain; the sequence is IIAEIYRSPK…RDLVDAEAKR (85 aa).

The sequence is that of YcgL domain-containing protein CJA_2437 from Cellvibrio japonicus (strain Ueda107) (Pseudomonas fluorescens subsp. cellulosa).